A 233-amino-acid polypeptide reads, in one-letter code: Phosphoribosylformylglycinamidine synthase subunit PurQ (233 aa).

A Glutamine amidotransferase type-1 domain is found at 3–233 (SAVLVFPGIN…GLVAHLERAA (231 aa)). The active-site Nucleophile is C87. Active-site residues include H204 and E206.

In terms of assembly, part of the FGAM synthase complex composed of 1 PurL, 1 PurQ and 2 PurS subunits.

The protein resides in the cytoplasm. The enzyme catalyses N(2)-formyl-N(1)-(5-phospho-beta-D-ribosyl)glycinamide + L-glutamine + ATP + H2O = 2-formamido-N(1)-(5-O-phospho-beta-D-ribosyl)acetamidine + L-glutamate + ADP + phosphate + H(+). It catalyses the reaction L-glutamine + H2O = L-glutamate + NH4(+). Its pathway is purine metabolism; IMP biosynthesis via de novo pathway; 5-amino-1-(5-phospho-D-ribosyl)imidazole from N(2)-formyl-N(1)-(5-phospho-D-ribosyl)glycinamide: step 1/2. In terms of biological role, part of the phosphoribosylformylglycinamidine synthase complex involved in the purines biosynthetic pathway. Catalyzes the ATP-dependent conversion of formylglycinamide ribonucleotide (FGAR) and glutamine to yield formylglycinamidine ribonucleotide (FGAM) and glutamate. The FGAM synthase complex is composed of three subunits. PurQ produces an ammonia molecule by converting glutamine to glutamate. PurL transfers the ammonia molecule to FGAR to form FGAM in an ATP-dependent manner. PurS interacts with PurQ and PurL and is thought to assist in the transfer of the ammonia molecule from PurQ to PurL. This chain is Phosphoribosylformylglycinamidine synthase subunit PurQ, found in Nitrobacter winogradskyi (strain ATCC 25391 / DSM 10237 / CIP 104748 / NCIMB 11846 / Nb-255).